The following is a 395-amino-acid chain: Na(+)/H(+) antiporter NhaA (395 aa).

The next 11 membrane-spanning stretches (helical) occupy residues 11 to 31 (FAME…ALII), 61 to 81 (LLLW…GLEV), 96 to 116 (IVLP…IYWF), 127 to 147 (GWAI…ALLG), 156 to 176 (LFLM…IAIF), 179 to 199 (GTLS…LVAM), 202 to 222 (MGVV…VCVL), 264 to 284 (FGIL…GVTL), 295 to 315 (IAVG…WMAV), 331 to 351 (VLGV…VGSL), and 366 to 386 (MGIL…TAAA).

This sequence belongs to the NhaA Na(+)/H(+) (TC 2.A.33) antiporter family.

It is found in the cell inner membrane. The enzyme catalyses Na(+)(in) + 2 H(+)(out) = Na(+)(out) + 2 H(+)(in). Its function is as follows. Na(+)/H(+) antiporter that extrudes sodium in exchange for external protons. The chain is Na(+)/H(+) antiporter NhaA from Pseudomonas fluorescens (strain ATCC BAA-477 / NRRL B-23932 / Pf-5).